Consider the following 227-residue polypeptide: CDP-diacylglycerol--inositol 3-phosphatidyltransferase 1 (227 aa).

2 helical membrane-spanning segments follow: residues 12–36 (LSVY…AFAV) and 42–61 (PLFS…DGWV). Residues D55 and D58 each contribute to the Mg(2+) site. G59, R63, and S69 together coordinate a CDP-1,2-diacyl-sn-glycerol. Helical transmembrane passes span 73–95 (AVLD…SQIY), 101–122 (FLSL…TFLA), 142–165 (YGNR…LLLI), and 177–200 (VVAT…GWSM). Residues D76 and D80 each coordinate Mg(2+). D80 serves as the catalytic Proton acceptor.

It belongs to the CDP-alcohol phosphatidyltransferase class-I family. The cofactor is Mg(2+). Requires Mn(2+) as cofactor. Expressed in stems, flowers, shoots and roots. Present in epidermal tissues.

Its subcellular location is the membrane. It carries out the reaction a CDP-1,2-diacyl-sn-glycerol + myo-inositol = a 1,2-diacyl-sn-glycero-3-phospho-(1D-myo-inositol) + CMP + H(+). In terms of biological role, catalyzes the biosynthesis of phosphatidylinositol (PtdIns) as well as PtdIns:inositol exchange reaction. May thus act to reduce an excessive cellular PtdIns content. The exchange activity is due to the reverse reaction of PtdIns synthase and is dependent on CMP, which is tightly bound to the enzyme. In Arabidopsis thaliana (Mouse-ear cress), this protein is CDP-diacylglycerol--inositol 3-phosphatidyltransferase 1 (PIS1).